The chain runs to 160 residues: uncharacterized protein (160 aa).

Residues 1–29 form the signal peptide; it reads MTGKTHIMGGIASCTAAAYYYGFDPVLMA. The next 2 helical transmembrane spans lie at 67–87 and 137–157; these read TFTH…TYIP and QLVL…LFHG.

The protein to E.coli YdjM.

The protein resides in the cell membrane. This is an uncharacterized protein from Bacillus subtilis (strain 168).